A 44-amino-acid polypeptide reads, in one-letter code: Cytochrome b559 subunit beta (44 aa).

The chain crosses the membrane as a helical span at residues Trp-19 to Ala-35. Position 23 (His-23) interacts with heme.

It belongs to the PsbE/PsbF family. As to quaternary structure, heterodimer of an alpha subunit and a beta subunit. PSII is composed of 1 copy each of membrane proteins PsbA, PsbB, PsbC, PsbD, PsbE, PsbF, PsbH, PsbI, PsbJ, PsbK, PsbL, PsbM, PsbT, PsbX, PsbY, PsbZ, Psb30/Ycf12, peripheral proteins PsbO, CyanoQ (PsbQ), PsbU, PsbV and a large number of cofactors. It forms dimeric complexes. It depends on heme b as a cofactor.

It localises to the cellular thylakoid membrane. In terms of biological role, this b-type cytochrome is tightly associated with the reaction center of photosystem II (PSII). PSII is a light-driven water:plastoquinone oxidoreductase that uses light energy to abstract electrons from H(2)O, generating O(2) and a proton gradient subsequently used for ATP formation. It consists of a core antenna complex that captures photons, and an electron transfer chain that converts photonic excitation into a charge separation. The polypeptide is Cytochrome b559 subunit beta (Rippkaea orientalis (strain PCC 8801 / RF-1) (Cyanothece sp. (strain PCC 8801))).